The chain runs to 42 residues: Putative protein RNF216-like (42 aa).

This is Putative protein RNF216-like (RNF216P1) from Homo sapiens (Human).